A 207-amino-acid polypeptide reads, in one-letter code: LexA repressor (207 aa).

Positions 28-48 (VREIGEAVGLASSSTVHGHLA) form a DNA-binding region, H-T-H motif. Residues serine 129 and lysine 167 each act as for autocatalytic cleavage activity in the active site.

It belongs to the peptidase S24 family. As to quaternary structure, homodimer.

The catalysed reaction is Hydrolysis of Ala-|-Gly bond in repressor LexA.. Functionally, represses a number of genes involved in the response to DNA damage (SOS response), including recA and lexA. In the presence of single-stranded DNA, RecA interacts with LexA causing an autocatalytic cleavage which disrupts the DNA-binding part of LexA, leading to derepression of the SOS regulon and eventually DNA repair. The chain is LexA repressor from Geobacillus thermodenitrificans (strain NG80-2).